A 173-amino-acid polypeptide reads, in one-letter code: Probable F-box protein At1g27490 (173 aa).

The F-box domain occupies 1–46 (MEWSLPVDLQEEILSRVPAKSLARWKSTPKQWKGPISIEFLHLLRS).

This Arabidopsis thaliana (Mouse-ear cress) protein is Probable F-box protein At1g27490.